The sequence spans 563 residues: GTPase Obg (563 aa).

The 167-residue stretch at 2-168 (SDFVDRVTVH…RDVILELKSI (167 aa)) folds into the Obg domain. In terms of domain architecture, OBG-type G spans 169–349 (ADVALVGFPS…LNFALSALVH (181 aa)). Residues 175–182 (GFPSAGKS), 200–204 (FTTLV), 221–224 (DVPG), 301–304 (NKID), and 330–332 (STA) contribute to the GTP site. Mg(2+) is bound by residues S182 and T202. The OCT domain maps to 383 to 469 (DEGGSALEFT…ARMVEFDWDP (87 aa)). Disordered stretches follow at residues 478–509 (LDGS…ERRA) and 528–563 (ERKA…ETEE). The span at 486-509 (RGKDLRLEEQDPRTHRRSNAERRA) shows a compositional bias: basic and acidic residues.

Belongs to the TRAFAC class OBG-HflX-like GTPase superfamily. OBG GTPase family. In terms of assembly, monomer. It depends on Mg(2+) as a cofactor.

It localises to the cytoplasm. In terms of biological role, an essential GTPase which binds GTP, GDP and possibly (p)ppGpp with moderate affinity, with high nucleotide exchange rates and a fairly low GTP hydrolysis rate. Plays a role in control of the cell cycle, stress response, ribosome biogenesis and in those bacteria that undergo differentiation, in morphogenesis control. The protein is GTPase Obg of Bifidobacterium longum subsp. infantis (strain ATCC 15697 / DSM 20088 / JCM 1222 / NCTC 11817 / S12).